Consider the following 288-residue polypeptide: Bifunctional protein FolD (288 aa).

NADP(+) is bound by residues 166 to 168 and isoleucine 232; that span reads GAS.

The protein belongs to the tetrahydrofolate dehydrogenase/cyclohydrolase family. Homodimer.

It catalyses the reaction (6R)-5,10-methylene-5,6,7,8-tetrahydrofolate + NADP(+) = (6R)-5,10-methenyltetrahydrofolate + NADPH. The enzyme catalyses (6R)-5,10-methenyltetrahydrofolate + H2O = (6R)-10-formyltetrahydrofolate + H(+). It participates in one-carbon metabolism; tetrahydrofolate interconversion. In terms of biological role, catalyzes the oxidation of 5,10-methylenetetrahydrofolate to 5,10-methenyltetrahydrofolate and then the hydrolysis of 5,10-methenyltetrahydrofolate to 10-formyltetrahydrofolate. This is Bifunctional protein FolD from Escherichia coli (strain UTI89 / UPEC).